A 204-amino-acid polypeptide reads, in one-letter code: Peptide deformylase (204 aa).

Fe cation contacts are provided by cysteine 131 and histidine 174. The active site involves glutamate 175. Histidine 178 is a Fe cation binding site.

It belongs to the polypeptide deformylase family. It depends on Fe(2+) as a cofactor.

The enzyme catalyses N-terminal N-formyl-L-methionyl-[peptide] + H2O = N-terminal L-methionyl-[peptide] + formate. In terms of biological role, removes the formyl group from the N-terminal Met of newly synthesized proteins. Requires at least a dipeptide for an efficient rate of reaction. N-terminal L-methionine is a prerequisite for activity but the enzyme has broad specificity at other positions. The chain is Peptide deformylase from Streptococcus equi subsp. zooepidemicus (strain H70).